The sequence spans 159 residues: Probable GPI-anchored protein ANS1 (159 aa).

The signal sequence occupies residues M1–A20. One copy of the PIR1/2/3 repeat lies at A101–T114. The GPI-anchor amidated glycine moiety is linked to residue G137. The propeptide at A138–L159 is removed in mature form.

It is found in the cell membrane. This is Probable GPI-anchored protein ANS1 (ANS1) from Saccharomyces cerevisiae (strain ATCC 204508 / S288c) (Baker's yeast).